A 40-amino-acid chain; its full sequence is Spodomicin (40 aa).

Disulfide bonds link C6-C20, C10-C32, and C21-C39.

As to quaternary structure, monomer. Contains three disulfide bonds. In terms of tissue distribution, hemolymph.

The protein localises to the secreted. Fungicide. In Spodoptera littoralis (Egyptian cotton leafworm), this protein is Spodomicin.